Reading from the N-terminus, the 298-residue chain is CCR4-NOT transcription complex subunit 9 (298 aa).

The protein belongs to the CNOT9 family. In terms of assembly, homodimer. Component of the CCR4-NOT complex.

It is found in the nucleus. The protein localises to the cytoplasm. Its subcellular location is the P-body. In terms of biological role, component of the CCR4-NOT complex which is one of the major cellular mRNA deadenylases and is linked to various cellular processes including bulk mRNA degradation, miRNA-mediated repression, translational repression during translational initiation and general transcription regulation. Additional complex functions may be a consequence of its influence on mRNA expression. Involved in down-regulation of MYB- and JUN-dependent transcription. Enhances ligand-dependent transcriptional activity of nuclear hormone receptors. May play a role in cell differentiation. The protein is CCR4-NOT transcription complex subunit 9 of Danio rerio (Zebrafish).